The chain runs to 678 residues: ABC transporter F family member 2 (678 aa).

2 consecutive ABC transporter domains span residues 84–342 and 411–626; these read VRLE…EAQY and VTVK…AREL. Residues 116 to 123 and 443 to 450 each bind ATP; these read GVNGAGKT and GPNGCGKS. Residues 630-678 are disordered; the sequence is AELEEKAPKVKAKSKMSKAEREARKKQKMKAFQASKKKSKSSKNAKRWN. The segment covering 653 to 678 has biased composition (basic residues); that stretch reads RKKQKMKAFQASKKKSKSSKNAKRWN.

This sequence belongs to the ABC transporter superfamily. ABCF family. EF3 (TC 3.A.1.121) subfamily.

The sequence is that of ABC transporter F family member 2 (ABCF2) from Arabidopsis thaliana (Mouse-ear cress).